The following is a 381-amino-acid chain: Spermidine/putrescine import ATP-binding protein PotA (381 aa).

The region spanning 22–252 (VELRNVFKFF…PKTSFVADFI (231 aa)) is the ABC transporter domain. Residue 54–61 (GPSGCGKT) participates in ATP binding.

It belongs to the ABC transporter superfamily. Spermidine/putrescine importer (TC 3.A.1.11.1) family. In terms of assembly, the complex is composed of two ATP-binding proteins (PotA), two transmembrane proteins (PotB and PotC) and a solute-binding protein (PotD).

It localises to the cell inner membrane. It carries out the reaction ATP + H2O + polyamine-[polyamine-binding protein]Side 1 = ADP + phosphate + polyamineSide 2 + [polyamine-binding protein]Side 1.. Functionally, part of the ABC transporter complex PotABCD involved in spermidine/putrescine import. Responsible for energy coupling to the transport system. This is Spermidine/putrescine import ATP-binding protein PotA from Nostoc sp. (strain PCC 7120 / SAG 25.82 / UTEX 2576).